The following is a 293-amino-acid chain: D-alanine--D-alanine ligase (293 aa).

Residues 98-291 enclose the ATP-grasp domain; the sequence is KIIWEQHSLT…FNKLVTSIIN (194 aa). 124 to 177 contacts ATP; sequence NFPLPWAVKPTLEGSSIGISKVDNQMQLNDALMLAWQYAPYALIEQWIKGDEYT. Positions 245, 258, and 260 each coordinate Mg(2+).

The protein belongs to the D-alanine--D-alanine ligase family. Mg(2+) is required as a cofactor. The cofactor is Mn(2+).

It is found in the cytoplasm. It catalyses the reaction 2 D-alanine + ATP = D-alanyl-D-alanine + ADP + phosphate + H(+). It participates in cell wall biogenesis; peptidoglycan biosynthesis. In terms of biological role, cell wall formation. This is D-alanine--D-alanine ligase from Vesicomyosocius okutanii subsp. Calyptogena okutanii (strain HA).